Reading from the N-terminus, the 364-residue chain is tRNA-specific 2-thiouridylase MnmA 1 (364 aa).

Residues 10–17 (GMSGGVDS) and M36 contribute to the ATP site. Catalysis depends on C106, which acts as the Nucleophile. C106 and C204 are joined by a disulfide. Residue G130 coordinates ATP. The tract at residues 154–156 (KDQ) is interaction with tRNA. C204 (cysteine persulfide intermediate) is an active-site residue. Residues 310-311 (RY) are interaction with tRNA.

This sequence belongs to the MnmA/TRMU family.

It is found in the cytoplasm. It catalyses the reaction S-sulfanyl-L-cysteinyl-[protein] + uridine(34) in tRNA + AH2 + ATP = 2-thiouridine(34) in tRNA + L-cysteinyl-[protein] + A + AMP + diphosphate + H(+). In terms of biological role, catalyzes the 2-thiolation of uridine at the wobble position (U34) of tRNA, leading to the formation of s(2)U34. The chain is tRNA-specific 2-thiouridylase MnmA 1 from Thermoanaerobacter sp. (strain X514).